Consider the following 87-residue polypeptide: Small ribosomal subunit protein uS15c (87 aa).

Belongs to the universal ribosomal protein uS15 family. As to quaternary structure, part of the 30S ribosomal subunit.

Its subcellular location is the plastid. It localises to the chloroplast. The polypeptide is Small ribosomal subunit protein uS15c (rps15) (Coffea arabica (Arabian coffee)).